A 431-amino-acid chain; its full sequence is Adenylosuccinate synthetase (431 aa).

Residues 12 to 18 (GDEGKGK) and 40 to 42 (GHS) each bind GTP. Asp-13 functions as the Proton acceptor in the catalytic mechanism. Residues Asp-13 and Gly-40 each contribute to the Mg(2+) site. Residues 13 to 16 (DEGK) and 38 to 41 (NAGH) each bind IMP. Residue His-41 is the Proton donor of the active site. Residues 114-133 (QQQERDRSKNGEKIGTTNKG) are disordered. Residues 115 to 125 (QQERDRSKNGE) are compositionally biased toward basic and acidic residues. Thr-130, Arg-144, Gln-225, Thr-240, and Arg-304 together coordinate IMP. Substrate is bound at residue 300–306 (TVTKRPR). Residues Arg-306, 332–334 (CLD), and 414–416 (SIG) contribute to the GTP site.

The protein belongs to the adenylosuccinate synthetase family. In terms of assembly, homodimer. The cofactor is Mg(2+).

Its subcellular location is the cytoplasm. It carries out the reaction IMP + L-aspartate + GTP = N(6)-(1,2-dicarboxyethyl)-AMP + GDP + phosphate + 2 H(+). It functions in the pathway purine metabolism; AMP biosynthesis via de novo pathway; AMP from IMP: step 1/2. In terms of biological role, plays an important role in the de novo pathway of purine nucleotide biosynthesis. Catalyzes the first committed step in the biosynthesis of AMP from IMP. This Pediococcus pentosaceus (strain ATCC 25745 / CCUG 21536 / LMG 10740 / 183-1w) protein is Adenylosuccinate synthetase.